We begin with the raw amino-acid sequence, 325 residues long: Thiamine-monophosphate kinase (325 aa).

Residues Asp30, Ser45, Thr46, and Asp47 each contribute to the Mg(2+) site. His54 provides a ligand contact to substrate. 2 residues coordinate Mg(2+): Asp75 and Asp122. ATP contacts are provided by residues 121–122 and Arg146; that span reads GD. Asp212 serves as a coordination point for Mg(2+). An ATP-binding site is contributed by Ser214. Asp215 lines the Mg(2+) pocket. Residues Glu263 and Tyr319 each contribute to the substrate site.

The protein belongs to the thiamine-monophosphate kinase family.

It carries out the reaction thiamine phosphate + ATP = thiamine diphosphate + ADP. It participates in cofactor biosynthesis; thiamine diphosphate biosynthesis; thiamine diphosphate from thiamine phosphate: step 1/1. In terms of biological role, catalyzes the ATP-dependent phosphorylation of thiamine-monophosphate (TMP) to form thiamine-pyrophosphate (TPP), the active form of vitamin B1. The chain is Thiamine-monophosphate kinase from Escherichia coli O157:H7.